The chain runs to 156 residues: Aspartate carbamoyltransferase regulatory chain (156 aa).

Residues cysteine 109, cysteine 114, cysteine 138, and cysteine 141 each contribute to the Zn(2+) site.

Belongs to the PyrI family. In terms of assembly, contains catalytic and regulatory chains. The cofactor is Zn(2+).

Functionally, involved in allosteric regulation of aspartate carbamoyltransferase. The sequence is that of Aspartate carbamoyltransferase regulatory chain from Baumannia cicadellinicola subsp. Homalodisca coagulata.